The chain runs to 287 residues: Pyridoxal kinase PdxY (287 aa).

Substrate is bound by residues S10 and 45 to 46 (TQ). Residues D112, A144, E149, K182, and 209–212 (RPLV) each bind ATP. Position 224 (D224) interacts with substrate.

It belongs to the pyridoxine kinase family. PdxY subfamily. Homodimer. The cofactor is Mg(2+).

It catalyses the reaction pyridoxal + ATP = pyridoxal 5'-phosphate + ADP + H(+). The protein operates within cofactor metabolism; pyridoxal 5'-phosphate salvage; pyridoxal 5'-phosphate from pyridoxal: step 1/1. Pyridoxal kinase involved in the salvage pathway of pyridoxal 5'-phosphate (PLP). Catalyzes the phosphorylation of pyridoxal to PLP. The sequence is that of Pyridoxal kinase PdxY from Escherichia coli O157:H7.